We begin with the raw amino-acid sequence, 278 residues long: MATH domain and coiled-coil domain-containing protein At1g31400 (278 aa).

Residues 6-131 (EKRITWTIKN…SGQVKIVAEV (126 aa)) enclose the MATH domain. A coiled-coil region spans residues 232 to 267 (KLDWLEKKLKEVGKTRMQQLEQNLKDLKESLCWSSD).

The chain is MATH domain and coiled-coil domain-containing protein At1g31400 from Arabidopsis thaliana (Mouse-ear cress).